Consider the following 322-residue polypeptide: Beta-ketoacyl-[acyl-carrier-protein] synthase III (322 aa).

Catalysis depends on residues C112 and H249. An ACP-binding region spans residues 250–254 (QANQR). The active site involves N279.

The protein belongs to the thiolase-like superfamily. FabH family. As to quaternary structure, homodimer.

It localises to the cytoplasm. It carries out the reaction malonyl-[ACP] + acetyl-CoA + H(+) = 3-oxobutanoyl-[ACP] + CO2 + CoA. It participates in lipid metabolism; fatty acid biosynthesis. Catalyzes the condensation reaction of fatty acid synthesis by the addition to an acyl acceptor of two carbons from malonyl-ACP. Catalyzes the first condensation reaction which initiates fatty acid synthesis and may therefore play a role in governing the total rate of fatty acid production. Possesses both acetoacetyl-ACP synthase and acetyl transacylase activities. Its substrate specificity determines the biosynthesis of branched-chain and/or straight-chain of fatty acids. The protein is Beta-ketoacyl-[acyl-carrier-protein] synthase III of Caulobacter vibrioides (strain ATCC 19089 / CIP 103742 / CB 15) (Caulobacter crescentus).